Reading from the N-terminus, the 228-residue chain is ATP synthase subunit a (228 aa).

Transmembrane regions (helical) follow at residues 14–34 (YFLL…WLFF), 71–91 (WVPI…LGLL), 101–121 (ISLT…LGFY), 139–159 (FLLP…PIAL), 165–185 (ANLT…WVLM), and 188–208 (VAIA…EIGV).

Belongs to the ATPase A chain family. In terms of assembly, F-type ATPases have 2 components, CF(1) - the catalytic core - and CF(0) - the membrane proton channel. CF(1) has five subunits: alpha(3), beta(3), gamma(1), delta(1), epsilon(1). CF(0) has three main subunits: a, b and c.

It localises to the mitochondrion inner membrane. In terms of biological role, mitochondrial membrane ATP synthase (F(1)F(0) ATP synthase or Complex V) produces ATP from ADP in the presence of a proton gradient across the membrane which is generated by electron transport complexes of the respiratory chain. F-type ATPases consist of two structural domains, F(1) - containing the extramembraneous catalytic core and F(0) - containing the membrane proton channel, linked together by a central stalk and a peripheral stalk. During catalysis, ATP synthesis in the catalytic domain of F(1) is coupled via a rotary mechanism of the central stalk subunits to proton translocation. Key component of the proton channel; it may play a direct role in the translocation of protons across the membrane. In Pisaster ochraceus (Ochre sea star), this protein is ATP synthase subunit a (ATP6).